The sequence spans 212 residues: Transmembrane protein 186 (212 aa).

The Mitochondrial matrix segment spans residues 1–78 (MAAVLRAVAR…YLSRLKVAQT (78 aa)). Residues 79 to 99 (ALTVAALPPGLYCYSQGLMPF) form a helical membrane-spanning segment. At 100–101 (SS) the chain is on the mitochondrial intermembrane side. The helical transmembrane segment at 102 to 122 (LCLAGGVAGFALAMLCWMSHF) threads the bilayer. The Mitochondrial matrix segment spans residues 123–212 (FRRLVGILYV…QVFGVLDALK (90 aa)).

Belongs to the TMEM186 family. As to quaternary structure, part of the mitochondrial complex I assembly/MCIA complex that comprises at least the core subunits TMEM126B, NDUFAF1, ECSIT and ACAD9 and complement subunits such as COA1 and TMEM186. Interacts with MT-ND3.

Its subcellular location is the mitochondrion inner membrane. In terms of biological role, as part of the MCIA complex, required for efficient assembly of the mitochondrial complex I. The chain is Transmembrane protein 186 from Bos taurus (Bovine).